Consider the following 337-residue polypeptide: DNA-directed RNA polymerase subunit alpha (337 aa).

The alpha N-terminal domain (alpha-NTD) stretch occupies residues 1–233 (MVREKVTVST…DLFIPFLHIE (233 aa)). The alpha C-terminal domain (alpha-CTD) stretch occupies residues 265–337 (KKIALKSIFI…FVIDLAKNEF (73 aa)).

The protein belongs to the RNA polymerase alpha chain family. As to quaternary structure, in plastids the minimal PEP RNA polymerase catalytic core is composed of four subunits: alpha, beta, beta', and beta''. When a (nuclear-encoded) sigma factor is associated with the core the holoenzyme is formed, which can initiate transcription.

Its subcellular location is the plastid. The protein resides in the chloroplast. It catalyses the reaction RNA(n) + a ribonucleoside 5'-triphosphate = RNA(n+1) + diphosphate. Functionally, DNA-dependent RNA polymerase catalyzes the transcription of DNA into RNA using the four ribonucleoside triphosphates as substrates. This Nicotiana tomentosiformis (Tobacco) protein is DNA-directed RNA polymerase subunit alpha.